Reading from the N-terminus, the 264-residue chain is 3-methyl-2-oxobutanoate hydroxymethyltransferase (264 aa).

Mg(2+)-binding residues include D45 and D84. Residues D45 to S46, D84, and K112 each bind 3-methyl-2-oxobutanoate. E114 is a Mg(2+) binding site. Catalysis depends on E181, which acts as the Proton acceptor.

It belongs to the PanB family. As to quaternary structure, homodecamer; pentamer of dimers. Mg(2+) serves as cofactor.

It is found in the cytoplasm. It carries out the reaction 3-methyl-2-oxobutanoate + (6R)-5,10-methylene-5,6,7,8-tetrahydrofolate + H2O = 2-dehydropantoate + (6S)-5,6,7,8-tetrahydrofolate. It functions in the pathway cofactor biosynthesis; (R)-pantothenate biosynthesis; (R)-pantoate from 3-methyl-2-oxobutanoate: step 1/2. Functionally, catalyzes the reversible reaction in which hydroxymethyl group from 5,10-methylenetetrahydrofolate is transferred onto alpha-ketoisovalerate to form ketopantoate. The chain is 3-methyl-2-oxobutanoate hydroxymethyltransferase from Shewanella piezotolerans (strain WP3 / JCM 13877).